Consider the following 473-residue polypeptide: Cannabinoid receptor 1 (473 aa).

At 1 to 121 (MKSILDGLAD…LNPSQQLAIA (121 aa)) the chain is on the extracellular side. The segment at 2-23 (KSILDGLADTTFRTITTDLLYV) is required for mitochondrial localization. N-linked (GlcNAc...) asparagine glycans are attached at residues asparagine 78 and asparagine 84. A helical membrane pass occupies residues 122–142 (VLSLTLGTFTVLENLLVLCVI). Residues 143–155 (LHSRSLRCRPSYH) are Cytoplasmic-facing. A helical membrane pass occupies residues 156-176 (FIGSLAVADLLGSVIFVYSFV). The Extracellular segment spans residues 177–188 (DFHVFHRKDSPN). Residues 189-209 (VFLFKLGGVTASFTASVGSLF) form a helical membrane-spanning segment. Topologically, residues 210–233 (LTAIDRYISIHRPLAYKRIVTRPK) are cytoplasmic. The helical transmembrane segment at 234–254 (AVVAFCLMWTIAIVIAVLPLL) threads the bilayer. Residues 255 to 278 (GWNCKKLQSVCSDIFPLIDETYLM) lie on the Extracellular side of the membrane. The helical transmembrane segment at 279–299 (FWIGVTSVLLLFIVYAYMYIL) threads the bilayer. The Cytoplasmic portion of the chain corresponds to 300 to 345 (WKAHSHAVRMIQRGTQKSIIIHTSEDGKVQVTRPDQARMDIRLAKT). The chain crosses the membrane as a helical span at residues 346 to 366 (LVLILVVLIICWGPLLAIMVY). The Extracellular portion of the chain corresponds to 367-378 (DVFGKMNKLIKT). Residues 379 to 399 (VFAFCSMLCLLNSTVNPIIYA) form a helical membrane-spanning segment. Over 400–473 (LRSKDLRHAF…VSTDTSAEAL (74 aa)) the chain is Cytoplasmic. A lipid anchor (S-palmitoyl cysteine) is attached at cysteine 416. 2 positions are modified to phosphoserine: serine 426 and serine 430.

It belongs to the G-protein coupled receptor 1 family. As to quaternary structure, interacts (via C-terminus) with CNRIP1. Associates with G protein alpha subunits, including G(i) alpha-1/GNAI1, G(i) alpha-3/GNAI3 and G(o)-alpha/GNAO1; palmitoylation is important for interaction with GNAI3 and GNAO1. Palmitoylation at Cys-416 is important for recruitment at both plasma membrane and lipid rafts and association with G protein alpha subunits. In terms of tissue distribution, expressed in brain neurons (at protein level). Detected throughout the striatum, cortex and hippocampus, with highest levels in the lateral striatum. In rostral brain regions, high expression levels in the dorsal lateral striatum, while in the caudal brain regions, high levels are observed in the ventral lateral striatum. Expressed in neurons. In the hypothalamus, expressed in both GABAergic and glutamatergic presynaptic terminals of POMC neurons (at protein level). Expressed in striated muscles, including skeletal muscles (gastrocnemius and rectus abdominis) and myocardium (at protein level). Expressed in the liver, with highest levels in Kupffer cells and lower levels in endothelial cells as well as hepatocytes, particularly in perivascular areas (at protein level). The hepatic expression level is up-regulated in obese mice compared to lean animals.

Its subcellular location is the cell membrane. The protein localises to the mitochondrion outer membrane. It localises to the cell projection. It is found in the axon. The protein resides in the presynapse. Its activity is regulated as follows. Hemopressin, a peptide derived from hemoglobin subunit alpha (HBA1 and/or HBA2), acts as an antagonist peptide: hemopressin-binding efficiently blocks cannabinoid receptor CNR1 and subsequent signaling. Functionally, G-protein coupled receptor for cannabinoids, including endocannabinoids (eCBs), such as N-arachidonoylethanolamide (also called anandamide or AEA) and 2-arachidonoylglycerol (2-AG). Mediates many cannabinoid-induced effects, acting, among others, on food intake, memory loss, gastrointestinal motility, catalepsy, ambulatory activity, anxiety, chronic pain. Signaling typically involves reduction in cyclic AMP. In the hypothalamus, may have a dual effect on mitochondrial respiration depending upon the agonist dose and possibly upon the cell type. Increases respiration at low doses, while decreases respiration at high doses. At high doses, CNR1 signal transduction involves G-protein alpha-i protein activation and subsequent inhibition of mitochondrial soluble adenylate cyclase, decrease in cyclic AMP concentration, inhibition of protein kinase A (PKA)-dependent phosphorylation of specific subunits of the mitochondrial electron transport system, including NDUFS2. In the hypothalamus, inhibits leptin-induced reactive oxygen species (ROS) formation and mediates cannabinoid-induced increase in SREBF1 and FASN gene expression. In response to cannabinoids, drives the release of orexigenic beta-endorphin, but not that of melanocyte-stimulating hormone alpha/alpha-MSH, from hypothalamic POMC neurons, hence promoting food intake. In the hippocampus, regulates cellular respiration and energy production in response to cannabinoids. Involved in cannabinoid-dependent depolarization-induced suppression of inhibition (DSI), a process in which depolarization of CA1 postsynaptic pyramidal neurons mobilizes eCBs, which retrogradely activate presynaptic CB1 receptors, transiently decreasing GABAergic inhibitory neurotransmission. Also reduces excitatory synaptic transmission. In superior cervical ganglions and cerebral vascular smooth muscle cells, inhibits voltage-gated Ca(2+) channels in a constitutive, as well as agonist-dependent manner. In cerebral vascular smooth muscle cells, cannabinoid-induced inhibition of voltage-gated Ca(2+) channels leads to vasodilation and decreased vascular tone. Induces leptin production in adipocytes and reduces LRP2-mediated leptin clearance in the kidney, hence participating in hyperleptinemia. In adipose tissue, CNR1 signaling leads to increased expression of SREBF1, ACACA and FASN genes. In the liver, activation by endocannabinoids leads to increased de novo lipogenesis and reduced fatty acid catabolism, associated with increased expression of SREBF1/SREBP-1, GCK, ACACA, ACACB and FASN genes. May also affect de novo cholesterol synthesis and HDL-cholesteryl ether uptake. Peripherally modulates energy metabolism. In high carbohydrate diet-induced obesity, may decrease the expression of mitochondrial dihydrolipoyl dehydrogenase/DLD in striated muscles, as well as that of selected glucose/ pyruvate metabolic enzymes, hence affecting energy expenditure through mitochondrial metabolism. In response to cannabinoid anandamide, elicits a pro-inflammatory response in macrophages, which involves NLRP3 inflammasome activation and IL1B and IL18 secretion. In macrophages infiltrating pancreatic islets, this process may participate in the progression of type-2 diabetes and associated loss of pancreatic beta-cells. This is Cannabinoid receptor 1 (Cnr1) from Mus musculus (Mouse).